We begin with the raw amino-acid sequence, 106 residues long: Nucleoid-associated protein XAC1110 (106 aa).

A compositionally biased stretch (basic and acidic residues) spans 80 to 89 (KIDAESKDRM). The tract at residues 80–106 (KIDAESKDRMGSATAGMQLPPGMKLPF) is disordered.

The protein belongs to the YbaB/EbfC family. Homodimer.

It localises to the cytoplasm. The protein localises to the nucleoid. In terms of biological role, binds to DNA and alters its conformation. May be involved in regulation of gene expression, nucleoid organization and DNA protection. The protein is Nucleoid-associated protein XAC1110 of Xanthomonas axonopodis pv. citri (strain 306).